A 318-amino-acid chain; its full sequence is NAD(P)H-dependent D-xylose reductase (318 aa).

Residue tyrosine 48 is the Proton donor of the active site. Histidine 110 contacts substrate. NAD(+) is bound by residues 165 to 166 (SN), 214 to 223 (SNFGPLSFLE), and 270 to 280 (KSTFPNTLAVN).

The protein belongs to the aldo/keto reductase family.

The enzyme catalyses xylitol + NAD(+) = D-xylose + NADH + H(+). It catalyses the reaction xylitol + NADP(+) = D-xylose + NADPH + H(+). The protein operates within carbohydrate metabolism; D-xylose degradation. Functionally, reduces D-xylose into xylitol. Has a preference for NADPH, but can also utilize NADH as cosubstrate. The polypeptide is NAD(P)H-dependent D-xylose reductase (XYL1) (Pachysolen tannophilus (Yeast)).